Consider the following 167-residue polypeptide: uncharacterized protein (167 aa).

Residues 115–167 (SYRSQPQLGFKSTPPAHSSVFHHSVKAPKEDQAQEAASRPLTSQDGWNPNIKK) form a disordered region.

This is an uncharacterized protein from Homo sapiens (Human).